We begin with the raw amino-acid sequence, 257 residues long: Small ribosomal subunit protein uS2 (257 aa).

Positions 237 to 257 are disordered; the sequence is MDEADGSEAEPEDPAAPESAE. Residues 240-257 show a composition bias toward acidic residues; sequence ADGSEAEPEDPAAPESAE.

It belongs to the universal ribosomal protein uS2 family.

The sequence is that of Small ribosomal subunit protein uS2 from Chlorobium phaeovibrioides (strain DSM 265 / 1930) (Prosthecochloris vibrioformis (strain DSM 265)).